A 273-amino-acid chain; its full sequence is Formamidopyrimidine-DNA glycosylase (273 aa).

Pro2 (schiff-base intermediate with DNA) is an active-site residue. Glu3 acts as the Proton donor in catalysis. Catalysis depends on Lys57, which acts as the Proton donor; for beta-elimination activity. The DNA site is built by His91, Arg110, and Lys151. The segment at Gln236 to Met270 adopts an FPG-type zinc-finger fold. Catalysis depends on Arg260, which acts as the Proton donor; for delta-elimination activity.

The protein belongs to the FPG family. In terms of assembly, monomer. The cofactor is Zn(2+).

It carries out the reaction Hydrolysis of DNA containing ring-opened 7-methylguanine residues, releasing 2,6-diamino-4-hydroxy-5-(N-methyl)formamidopyrimidine.. The catalysed reaction is 2'-deoxyribonucleotide-(2'-deoxyribose 5'-phosphate)-2'-deoxyribonucleotide-DNA = a 3'-end 2'-deoxyribonucleotide-(2,3-dehydro-2,3-deoxyribose 5'-phosphate)-DNA + a 5'-end 5'-phospho-2'-deoxyribonucleoside-DNA + H(+). Its function is as follows. Involved in base excision repair of DNA damaged by oxidation or by mutagenic agents. Acts as a DNA glycosylase that recognizes and removes damaged bases. Has a preference for oxidized purines, such as 7,8-dihydro-8-oxoguanine (8-oxoG). Has AP (apurinic/apyrimidinic) lyase activity and introduces nicks in the DNA strand. Cleaves the DNA backbone by beta-delta elimination to generate a single-strand break at the site of the removed base with both 3'- and 5'-phosphates. This Actinobacillus pleuropneumoniae serotype 3 (strain JL03) protein is Formamidopyrimidine-DNA glycosylase.